The chain runs to 363 residues: 3-isopropylmalate dehydrogenase A (363 aa).

78–89 is a binding site for NAD(+); that stretch reads GPKWGTGAVRPE. Residues R96, R106, R135, and D222 each coordinate substrate. Mg(2+) contacts are provided by D222, D247, and D251. 287–299 is an NAD(+) binding site; the sequence is GSAPDIAGKGIVN.

Belongs to the isocitrate and isopropylmalate dehydrogenases family. Homodimer. Requires Mg(2+) as cofactor. It depends on Mn(2+) as a cofactor.

Its subcellular location is the cytoplasm. The enzyme catalyses (2R,3S)-3-isopropylmalate + NAD(+) = 4-methyl-2-oxopentanoate + CO2 + NADH. It functions in the pathway amino-acid biosynthesis; L-leucine biosynthesis; L-leucine from 3-methyl-2-oxobutanoate: step 3/4. Catalyzes the oxidation of 3-carboxy-2-hydroxy-4-methylpentanoate (3-isopropylmalate) to 3-carboxy-4-methyl-2-oxopentanoate. The product decarboxylates to 4-methyl-2 oxopentanoate. The sequence is that of 3-isopropylmalate dehydrogenase A (leu2A) from Aspergillus niger.